The primary structure comprises 1888 residues: E3 ubiquitin-protein ligase UPL3 (1888 aa).

The span at 1 to 10 (METRSRKRAE) shows a compositional bias: basic and acidic residues. The interval 1-157 (METRSRKRAE…NGGFMHPNMS (157 aa)) is disordered. Low complexity predominate over residues 41-81 (LSSSSSSSLAPTPPSSSTTTRSRSSRSAAAAAPMDTSTDSS). Residues 97–124 (NSDKGKEKEHDVRIRERERERDRAREQL) show a composition bias toward basic and acidic residues. Acidic residues predominate over residues 137–146 (DEDDDNDSED). 4 ARM repeats span residues 227–267 (EDSL…HLCD), 270–310 (PSSC…KISQ), 312–349 (HPTA…NMCK), and 351–390 (LPSD…RIAE). Disordered regions lie at residues 660–711 (KPSH…IGAN), 970–1119 (ALKP…LPMC), 1134–1157 (DDDG…GAAA), and 1280–1307 (RLSV…VESQ). Residues 986 to 1002 (PSGAGVSSPSSSTPAST) show a composition bias toward low complexity. A compositionally biased stretch (basic and acidic residues) spans 1019–1029 (TSKKDPVHEKG). A compositionally biased stretch (acidic residues) spans 1076–1113 (SSEDEELEISPVDIDDALVIEEDDISDDEDDDNEDVLD). Composition is skewed to low complexity over residues 1148–1157 (ASGGTSGAAA) and 1286–1303 (ASST…TNSS). A K-box region spans residues 1377-1451 (AKVPLDEFVN…ALNRLQQQQG (75 aa)). The HECT domain maps to 1490–1888 (MYSSQKAVLE…NEGQGSFDLS (399 aa)). C1855 functions as the Glycyl thioester intermediate in the catalytic mechanism.

This sequence belongs to the UPL family. K-HECT subfamily. In terms of tissue distribution, widely expressed.

It carries out the reaction S-ubiquitinyl-[E2 ubiquitin-conjugating enzyme]-L-cysteine + [acceptor protein]-L-lysine = [E2 ubiquitin-conjugating enzyme]-L-cysteine + N(6)-ubiquitinyl-[acceptor protein]-L-lysine.. Its pathway is protein modification; protein ubiquitination. Functionally, probable E3 ubiquitin-protein ligase which mediates ubiquitination and subsequent proteasomal degradation of target proteins. Involved in the repression of endoreduplication process and the cell morphogenesis in the trichomes. This chain is E3 ubiquitin-protein ligase UPL3 (UPL3), found in Arabidopsis thaliana (Mouse-ear cress).